The following is a 311-amino-acid chain: Transmembrane protein 177 (311 aa).

At methionine 1–threonine 17 the chain is on the mitochondrial matrix side. The helical transmembrane segment at glycine 18–proline 38 threads the bilayer. The Mitochondrial intermembrane segment spans residues aspartate 39 to threonine 166. The chain crosses the membrane as a helical span at residues alanine 167 to alanine 187. Topologically, residues lysine 188 to proline 197 are mitochondrial matrix. The helical transmembrane segment at methionine 198 to phenylalanine 218 threads the bilayer. Topologically, residues serine 219–serine 311 are mitochondrial intermembrane.

It belongs to the TMEM177 family. Found in a complex with COX20, COA6, MT-CO2/COX2, COX18, SCO1 and SCO2. Interacts with COX20. Interacts with COX1, MT-CO2/COX2, SCO1 and SCO2 in a COX20-dependent manner.

Its subcellular location is the mitochondrion inner membrane. Its function is as follows. Plays a role in the early steps of cytochrome c oxidase subunit II (MT-CO2/COX2) maturation and is required for the stabilization of COX20 and the newly synthesized MT-CO2/COX2 protein. The sequence is that of Transmembrane protein 177 (TMEM177) from Homo sapiens (Human).